Reading from the N-terminus, the 347-residue chain is Haptoglobin (347 aa).

An N-terminal signal peptide occupies residues Met1–Ala18. A Sushi domain is found at Asp31–Ala88. Intrachain disulfides connect Cys52-Cys86 and Cys90-Cys207. Residues Ile103–Ala345 enclose the Peptidase S1 domain. Asn148, Asn152, Asn182, Asn230, and Asn256 each carry an N-linked (GlcNAc...) asparagine glycan. Disulfide bonds link Cys250–Cys281 and Cys292–Cys322. The interaction with CD163 stretch occupies residues Val259–Ile264.

This sequence belongs to the peptidase S1 family. As to quaternary structure, tetramer of two alpha and two beta chains; disulfide-linked. The hemoglobin/haptoglobin complex is composed of a haptoglobin dimer bound to two hemoglobin alpha-beta dimers. Interacts with CD163. Interacts with ERGIC3. In terms of tissue distribution, expressed by the liver and secreted in plasma.

The protein localises to the secreted. As a result of hemolysis, hemoglobin is found to accumulate in the kidney and is secreted in the urine. Haptoglobin captures, and combines with free plasma hemoglobin to allow hepatic recycling of heme iron and to prevent kidney damage. Haptoglobin also acts as an antioxidant, has antibacterial activity and plays a role in modulating many aspects of the acute phase response. Hemoglobin/haptoglobin complexes are rapidly cleared by the macrophage CD163 scavenger receptor expressed on the surface of liver Kupfer cells through an endocytic lysosomal degradation pathway. In Oryctolagus cuniculus (Rabbit), this protein is Haptoglobin (HP).